Consider the following 293-residue polypeptide: Pantothenate synthetase (293 aa).

30–37 (MGNLHEGH) provides a ligand contact to ATP. His-37 (proton donor) is an active-site residue. Gln-61 is a binding site for (R)-pantoate. A beta-alanine-binding site is contributed by Gln-61. 149 to 152 (GEKD) provides a ligand contact to ATP. Gln-155 contributes to the (R)-pantoate binding site. ATP-binding positions include Val-178 and 186-189 (MSSR).

Belongs to the pantothenate synthetase family. As to quaternary structure, homodimer.

The protein localises to the cytoplasm. The enzyme catalyses (R)-pantoate + beta-alanine + ATP = (R)-pantothenate + AMP + diphosphate + H(+). Its pathway is cofactor biosynthesis; (R)-pantothenate biosynthesis; (R)-pantothenate from (R)-pantoate and beta-alanine: step 1/1. Its function is as follows. Catalyzes the condensation of pantoate with beta-alanine in an ATP-dependent reaction via a pantoyl-adenylate intermediate. The polypeptide is Pantothenate synthetase (Vibrio cholerae serotype O1 (strain ATCC 39541 / Classical Ogawa 395 / O395)).